The primary structure comprises 251 residues: MIVYEYPFNERIRTLLRLEDLYEKFAFFIGQDHPQHHHVALATMFEMLEVAGRADLKSDLLQELERQKQTLLGFKSNPNVEAEMLDAILFDLDRISAALIASQGKTGQHIRENEWLMSIRGRTIIPGGACEFDLPSYYAWQHDSAEQRLADIHKWFTPLAPLFDAIGMVLRLLRESGRPVKMIAQTGSYQQMLQGKAYQMLRLNIDEALGAIPEISANKYMLWIRFTSQDGDMKPKAFEGDVPFELSLCSF.

The protein belongs to the ZapD family. In terms of assembly, interacts with FtsZ.

It is found in the cytoplasm. In terms of biological role, cell division factor that enhances FtsZ-ring assembly. Directly interacts with FtsZ and promotes bundling of FtsZ protofilaments, with a reduction in FtsZ GTPase activity. The sequence is that of Cell division protein ZapD from Janthinobacterium sp. (strain Marseille) (Minibacterium massiliensis).